A 384-amino-acid chain; its full sequence is Gastrin-releasing peptide receptor (384 aa).

Residues 1-39 (MDPNNCSHLNLEVDPFLSCNNTFNQTLNPPKMDNWFHPG) are Extracellular-facing. Residues asparagine 5, asparagine 20, and asparagine 24 are each glycosylated (N-linked (GlcNAc...) asparagine). A helical membrane pass occupies residues 40-63 (IIYVIPAVYGLIIVIGLIGNITLI). Topologically, residues 64 to 77 (KIFCTVKSMRNVPN) are cytoplasmic. The helical transmembrane segment at 78-97 (LFISSLALGDLLLLVTCAPV) threads the bilayer. Residues 98–115 (DASKYLADRWLFGRIGCK) lie on the Extracellular side of the membrane. The cysteines at positions 114 and 197 are disulfide-linked. A helical membrane pass occupies residues 116–137 (LIPFIQLTSVGVSVFTLTALSA). At 138–153 (DRYKAIVRPMDIQASH) the chain is on the cytoplasmic side. Residues 154–175 (ALMKICLKAALIWIVSMLLAIP) traverse the membrane as a helical segment. Over 176 to 209 (EAVFSDLHPFHVKDTNQTFISCAPYPHSNELHPK) the chain is Extracellular. Residues 210–235 (IHSMASFLVFYIIPLSIISVYYYFIA) form a helical membrane-spanning segment. Over 236-265 (RNLIQSAYNLPVEGNIHVKKQIESRKRLAK) the chain is Cytoplasmic. A helical transmembrane segment spans residues 266–286 (TVLVFVGLFAFCWLPNHVIYL). Topologically, residues 287–299 (YRSYHYSEVDTSM) are extracellular. The chain crosses the membrane as a helical span at residues 300-326 (LHFITSICARLLAFTNSCVNPFALYLL). At 327–384 (SKSFRKQFNTQLLCCQPSLLNRSHSTGRSTTCMTSFKSTNPSATFSLINGNICHEGYV) the chain is on the cytoplasmic side. Cysteine 340 carries the S-palmitoyl cysteine lipid modification. Residue serine 351 is modified to Phosphoserine.

This sequence belongs to the G-protein coupled receptor 1 family. As to expression, expressed in the hippocampal CA1 region (at protein level).

The protein localises to the cell membrane. Its function is as follows. Receptor for gastrin-releasing peptide (GRP). Signals via association with G proteins that activate a phosphatidylinositol-calcium second messenger system, resulting in Akt phosphorylation. Contributes to the regulation of food intake. Contributes to the perception of prurient stimuli and transmission of itch signals in the spinal cord that promote scratching behavior, but does not play a role in the perception of pain. Contributes primarily to nonhistaminergic itch sensation. In one study, shown to act in the amygdala as part of an inhibitory network which inhibits memory specifically related to learned fear. In another study, shown to contribute to disinhibition of glutamatergic cells in the auditory cortex via signaling on vasoactive intestinal peptide-expressing cells which leads to enhanced auditory fear memories. Contributes to the induction of sighing through signaling in the pre-Botzinger complex, a cluster of several thousand neurons in the ventrolateral medulla responsible for inspiration during respiratory activity. This Rattus norvegicus (Rat) protein is Gastrin-releasing peptide receptor (Grpr).